Here is a 377-residue protein sequence, read N- to C-terminus: Transcription factor ast-1 (377 aa).

A disordered region spans residues 72-143; the sequence is PNRMLYNDNT…SNGSSSSTES (72 aa). Composition is skewed to low complexity over residues 96 to 109 and 118 to 142; these read STSA…TSSK and TESS…SSTE. The segment at residues 214 to 294 is a DNA-binding region (ETS); it reads TQLWQFLLEL…HGKRYAYKFD (81 aa).

It belongs to the ETS family. In terms of tissue distribution, expressed in the A-neurons in the male-specific genital sensilla (simple sense organs) known as rays.

It is found in the nucleus. Its subcellular location is the cell projection. The protein localises to the neuron projection. Its function is as follows. Transcription factor. Probably binds to DNA sequences containing the consensus motif 5'-CGGA[AT][AG]-3'. Positively modulates expression of dopamine pathway genes, acting as a terminal selector for differentiation of dopaminergic neurons; may act in concert with homeobox proteins ceh-40, ceh-43 and ceh-20. Required for axon navigation in some interneurons, perhaps acting in the same pathways as basement membrane protein nid-1 and unc-6/netrin. Plays a role in the differentiation of the ventral cord pioneer neuron AVG. Required for morphogenesis of the pharynx. This chain is Transcription factor ast-1, found in Caenorhabditis elegans.